Here is a 660-residue protein sequence, read N- to C-terminus: Cysteine-rich receptor-like protein kinase 22 (660 aa).

The signal sequence occupies residues 1–24 (MKQRSFLSILCFILLAFGVASVSA). Gnk2-homologous domains are found at residues 25-128 (QTCI…NISF) and 137-250 (IEPQ…LFTF). At 25-294 (QTCIENRKYF…DSRGVSAGIV (270 aa)) the chain is on the extracellular side. N-linked (GlcNAc...) asparagine glycosylation is found at N37, N53, N105, N125, N191, N230, and N256. Residues 264 to 273 (KPPMNVPRPP) show a composition bias toward pro residues. The disordered stretch occupies residues 264–283 (KPPMNVPRPPSVGHGANTTD). N280 and N284 each carry an N-linked (GlcNAc...) asparagine glycan. A helical membrane pass occupies residues 295 to 315 (VVITVPAVVIVLILVVLGFFI). Over 316–660 (CWRRKSLQRT…DPLSEGLESG (345 aa)) the chain is Cytoplasmic. The Protein kinase domain maps to 353–632 (FSKSNKLGEG…IVSMLTSNTI (280 aa)). Residues 359-367 (LGEGRFGEV) and K381 contribute to the ATP site. Position 426 is a phosphotyrosine (Y426). Residue D478 is the Proton acceptor of the active site. S482 carries the post-translational modification Phosphoserine. The residue at position 518 (T518) is a Phosphothreonine. A Phosphotyrosine modification is found at Y526.

The protein belongs to the protein kinase superfamily. Ser/Thr protein kinase family. CRK subfamily.

The protein localises to the membrane. It catalyses the reaction L-seryl-[protein] + ATP = O-phospho-L-seryl-[protein] + ADP + H(+). The catalysed reaction is L-threonyl-[protein] + ATP = O-phospho-L-threonyl-[protein] + ADP + H(+). The sequence is that of Cysteine-rich receptor-like protein kinase 22 (CRK22) from Arabidopsis thaliana (Mouse-ear cress).